Consider the following 2122-residue polypeptide: Pecanex-like protein 2 (2122 aa).

2 helical membrane-spanning segments follow: residues 36-53 and 60-82; these read LYLW…HLAF and ALFY…YRLH. 2 disordered regions span residues 92 to 164 and 180 to 250; these read QHRS…ELPA and QPEA…LVNP. Polar residues-rich tracts occupy residues 146–157 and 185–203; these read SRGQSVHSQHSS and ASST…SQGR. Asn-288 carries N-linked (GlcNAc...) asparagine glycosylation. Low complexity-rich tracts occupy residues 392–407 and 458–476; these read VTSS…AESA and PDRC…PGST. Disordered regions lie at residues 392-556 and 575-634; these read VTSS…QIPN and VVAP…PVFT. Over residues 528–538 the composition is skewed to basic and acidic residues; sequence STKEVVSDGEK. An N-linked (GlcNAc...) asparagine glycan is attached at Asn-556. Basic and acidic residues predominate over residues 599–618; sequence TKEEAVENEKPNGRDPKPGK. A compositionally biased stretch (polar residues) spans 625–634; sequence DPANGSPVFT. 13 consecutive transmembrane segments (helical) span residues 825–845, 849–869, 882–902, 933–953, 976–998, 1010–1030, 1080–1100, 1105–1125, 1174–1194, 1218–1238, 1245–1265, 1270–1290, and 1305–1325; these read VAVL…NRGF, LWVL…LKSV, QIIA…ILLL, HLIV…FPQI, GITS…HAFC, HIPA…YHLS, LVIC…TVFL, FLSI…HHLL, YLLY…SISN, SFCN…FFHF, ESFL…GDLL, FVLA…HVFA, and TFAT…VIFI. Asn-1393, Asn-1534, and Asn-1802 each carry an N-linked (GlcNAc...) asparagine glycan. Disordered stretches follow at residues 1858-1943 and 1955-1991; these read SVGQ…SSGP and STSV…TTGH. Basic and acidic residues predominate over residues 1888–1898; sequence ESRDGSTEQPR. Residues 1922-1942 are compositionally biased toward polar residues; sequence SQSVQAHSAISQRPPTLSSSG. Residues 1968–1981 are compositionally biased toward low complexity; it reads SRLSLHTSAASLHS. Residue Asn-2039 is glycosylated (N-linked (GlcNAc...) asparagine). The segment at 2097 to 2122 is disordered; it reads VLCRRASQEDMGLDDTASQQSTSDEQ. The span at 2112 to 2122 shows a compositional bias: polar residues; sequence TASQQSTSDEQ.

It belongs to the pecanex family.

Its subcellular location is the membrane. In terms of biological role, may play a role in tumorigenesis. The polypeptide is Pecanex-like protein 2 (Mus musculus (Mouse)).